A 1506-amino-acid chain; its full sequence is Phosphatidylinositol 3-kinase C2 domain-containing subunit gamma (1506 aa).

Residues methionine 1–arginine 34 form a disordered region. Polar residues predominate over residues aspartate 20–arginine 34. Residues aspartate 285–aspartate 371 form the PI3K-RBD domain. A C2 PI3K-type domain is found at leucine 541 to proline 689. The region spanning arginine 704 to cysteine 880 is the PIK helical domain. Residues aspartate 949–proline 1227 form the PI3K/PI4K catalytic domain. The segment at tyrosine 955 to serine 961 is G-loop. The interval glycine 1091–asparagine 1099 is catalytic loop. The interval histidine 1110–threonine 1136 is activation loop. In terms of domain architecture, PX spans leucine 1260 to proline 1372. Positions aspartate 1381–isoleucine 1506 constitute a C2 domain.

Belongs to the PI3/PI4-kinase family. Expressed predominantly in liver. Also found in kidney, lung and lymphoid tissue. Down-regulated in BeF3 cells expressing the BCR-ABL oncogene p185.

The protein resides in the membrane. The catalysed reaction is a 1,2-diacyl-sn-glycero-3-phospho-(1D-myo-inositol 4-phosphate) + ATP = a 1,2-diacyl-sn-glycero-3-phospho-(1D-myo-inositol-3,4-bisphosphate) + ADP + H(+). It carries out the reaction a 1,2-diacyl-sn-glycero-3-phospho-(1D-myo-inositol) + ATP = a 1,2-diacyl-sn-glycero-3-phospho-(1D-myo-inositol-3-phosphate) + ADP + H(+). Generates phosphatidylinositol 3-phosphate (PtdIns3P) and phosphatidylinositol 3,4-bisphosphate (PtdIns(3,4)P2) that act as second messengers. May play a role in SDF1A-stimulated chemotaxis. The chain is Phosphatidylinositol 3-kinase C2 domain-containing subunit gamma (Pik3c2g) from Mus musculus (Mouse).